The sequence spans 106 residues: uncharacterized protein (106 aa).

This is an uncharacterized protein from Invertebrate iridescent virus 3 (IIV-3).